The sequence spans 183 residues: Oligoribonuclease (183 aa).

In terms of domain architecture, Exonuclease spans 8–171; the sequence is LIWLDLEMTG…QDIRDSIEEL (164 aa). The active site involves Y129.

Belongs to the oligoribonuclease family.

The protein resides in the cytoplasm. Functionally, 3'-to-5' exoribonuclease specific for small oligoribonucleotides. This is Oligoribonuclease from Coxiella burnetii (strain RSA 493 / Nine Mile phase I).